We begin with the raw amino-acid sequence, 719 residues long: Fatty acid oxidation complex subunit alpha (719 aa).

Positions 1–190 (MVYQGNRITV…KLGLVDATVA (190 aa)) are enoyl-CoA hydratase/isomerase. Asp-298 lines the substrate pocket. Residues 313 to 719 (HEINEAAVLG…AAGETFYATA (407 aa)) are 3-hydroxyacyl-CoA dehydrogenase. Residues Met-326, Asp-345, 402–404 (VVE), Lys-409, and Ser-431 contribute to the NAD(+) site. His-452 (for 3-hydroxyacyl-CoA dehydrogenase activity) is an active-site residue. Asn-455 provides a ligand contact to NAD(+). Substrate is bound at residue Asn-502.

This sequence in the N-terminal section; belongs to the enoyl-CoA hydratase/isomerase family. In the C-terminal section; belongs to the 3-hydroxyacyl-CoA dehydrogenase family. In terms of assembly, heterotetramer of two alpha chains (FadB) and two beta chains (FadA).

The enzyme catalyses a (3S)-3-hydroxyacyl-CoA + NAD(+) = a 3-oxoacyl-CoA + NADH + H(+). It catalyses the reaction a (3S)-3-hydroxyacyl-CoA = a (2E)-enoyl-CoA + H2O. The catalysed reaction is a 4-saturated-(3S)-3-hydroxyacyl-CoA = a (3E)-enoyl-CoA + H2O. It carries out the reaction (3S)-3-hydroxybutanoyl-CoA = (3R)-3-hydroxybutanoyl-CoA. The enzyme catalyses a (3Z)-enoyl-CoA = a 4-saturated (2E)-enoyl-CoA. It catalyses the reaction a (3E)-enoyl-CoA = a 4-saturated (2E)-enoyl-CoA. Its pathway is lipid metabolism; fatty acid beta-oxidation. Its function is as follows. Involved in the aerobic and anaerobic degradation of long-chain fatty acids via beta-oxidation cycle. Catalyzes the formation of 3-oxoacyl-CoA from enoyl-CoA via L-3-hydroxyacyl-CoA. It can also use D-3-hydroxyacyl-CoA and cis-3-enoyl-CoA as substrate. The polypeptide is Fatty acid oxidation complex subunit alpha (Psychrobacter arcticus (strain DSM 17307 / VKM B-2377 / 273-4)).